Here is a 257-residue protein sequence, read N- to C-terminus: MLILISPAKTLDYQSPLATTRYTQPELLEYSQQLIGIARKLTAPQIGKLMSISDKLADLNATRFHDWHPDFTPQNARQAILAFKGDVYTGLQAETLTEDDFDFAQRHLRMLSGLYGVLRPLDLMQPYRLEMGIRLENPRGKDLYQFWGETITEKLNQALQAQGDDIVINLVSDEYFKSVKTQKLQGQLIKPVFLDEKNGKFKVISFYAKKARGLMSRYIIENRLTQPEQLKAFNSEGYFFDAEASEKGELVFKRHEQ.

The protein belongs to the UPF0246 family.

The chain is UPF0246 protein KPK_4750 from Klebsiella pneumoniae (strain 342).